The following is a 273-amino-acid chain: Large ribosomal subunit protein uL2 (273 aa).

Disordered regions lie at residues 31 to 50 (APLL…GRIT) and 221 to 273 (RGTA…RRGK). Basic residues predominate over residues 253-273 (KGKKTRHNKRTDKYIVRRRGK).

It belongs to the universal ribosomal protein uL2 family. Part of the 50S ribosomal subunit. Forms a bridge to the 30S subunit in the 70S ribosome.

Its function is as follows. One of the primary rRNA binding proteins. Required for association of the 30S and 50S subunits to form the 70S ribosome, for tRNA binding and peptide bond formation. It has been suggested to have peptidyltransferase activity; this is somewhat controversial. Makes several contacts with the 16S rRNA in the 70S ribosome. The sequence is that of Large ribosomal subunit protein uL2 from Actinobacillus pleuropneumoniae serotype 7 (strain AP76).